The primary structure comprises 37 residues: Large ribosomal subunit protein bL36A (37 aa).

Belongs to the bacterial ribosomal protein bL36 family.

The protein is Large ribosomal subunit protein bL36A of Actinobacillus pleuropneumoniae serotype 5b (strain L20).